Reading from the N-terminus, the 107-residue chain is U1-lycotoxin-Ls1b (107 aa).

A signal peptide spans 1–20 (MMKVLVVVALLPTLISYSSS). Residues 21 to 41 (EGIDDLEADELLSLMANEQTR) constitute a propeptide that is removed on maturation. Disulfide bonds link C44/C59, C51/C68, C58/C86, and C70/C84.

Belongs to the neurotoxin 19 (CSTX) family. 04 (U1-Lctx) subfamily. As to expression, expressed by the venom gland.

It is found in the secreted. This chain is U1-lycotoxin-Ls1b, found in Lycosa singoriensis (Wolf spider).